Consider the following 422-residue polypeptide: Glutamyl-tRNA reductase (422 aa).

Substrate-binding positions include T49 to R52, S110, E115 to Q117, and Q121. C50 acts as the Nucleophile in catalysis. G190 to I195 lines the NADP(+) pocket.

Belongs to the glutamyl-tRNA reductase family. As to quaternary structure, homodimer.

The catalysed reaction is (S)-4-amino-5-oxopentanoate + tRNA(Glu) + NADP(+) = L-glutamyl-tRNA(Glu) + NADPH + H(+). It functions in the pathway porphyrin-containing compound metabolism; protoporphyrin-IX biosynthesis; 5-aminolevulinate from L-glutamyl-tRNA(Glu): step 1/2. Functionally, catalyzes the NADPH-dependent reduction of glutamyl-tRNA(Glu) to glutamate 1-semialdehyde (GSA). This is Glutamyl-tRNA reductase from Colwellia psychrerythraea (strain 34H / ATCC BAA-681) (Vibrio psychroerythus).